Consider the following 804-residue polypeptide: Enhancer of polycomb homolog 2 (804 aa).

Disordered regions lie at residues 372–395, 484–508, 603–624, and 646–669; these read QSSD…ENDP, GFSS…DRHC, QSQQ…SDCM, and PVRS…VQPS. 2 stretches are compositionally biased toward polar residues: residues 611 to 624 and 654 to 669; these read SHPK…SDCM and DQNA…VQPS.

The protein belongs to the enhancer of polycomb family.

The protein localises to the nucleus. May play a role in transcription or DNA repair. The polypeptide is Enhancer of polycomb homolog 2 (epc2) (Xenopus laevis (African clawed frog)).